We begin with the raw amino-acid sequence, 147 residues long: Nucleoside diphosphate kinase (147 aa).

Positions 9, 57, 85, 91, 102, and 112 each coordinate ATP. Residue His115 is the Pros-phosphohistidine intermediate of the active site.

Belongs to the NDK family. Mg(2+) is required as a cofactor.

The protein resides in the cytoplasm. The enzyme catalyses a 2'-deoxyribonucleoside 5'-diphosphate + ATP = a 2'-deoxyribonucleoside 5'-triphosphate + ADP. The catalysed reaction is a ribonucleoside 5'-diphosphate + ATP = a ribonucleoside 5'-triphosphate + ADP. Its function is as follows. Major role in the synthesis of nucleoside triphosphates other than ATP. The ATP gamma phosphate is transferred to the NDP beta phosphate via a ping-pong mechanism, using a phosphorylated active-site intermediate. The chain is Nucleoside diphosphate kinase from Thermoplasma volcanium (strain ATCC 51530 / DSM 4299 / JCM 9571 / NBRC 15438 / GSS1).